The following is a 427-amino-acid chain: Glutamate-1-semialdehyde 2,1-aminomutase (427 aa).

N6-(pyridoxal phosphate)lysine is present on Lys-265.

It belongs to the class-III pyridoxal-phosphate-dependent aminotransferase family. HemL subfamily. As to quaternary structure, homodimer. Pyridoxal 5'-phosphate is required as a cofactor.

Its subcellular location is the cytoplasm. It catalyses the reaction (S)-4-amino-5-oxopentanoate = 5-aminolevulinate. It functions in the pathway porphyrin-containing compound metabolism; protoporphyrin-IX biosynthesis; 5-aminolevulinate from L-glutamyl-tRNA(Glu): step 2/2. This is Glutamate-1-semialdehyde 2,1-aminomutase from Burkholderia cenocepacia (strain ATCC BAA-245 / DSM 16553 / LMG 16656 / NCTC 13227 / J2315 / CF5610) (Burkholderia cepacia (strain J2315)).